The chain runs to 389 residues: LL-diaminopimelate aminotransferase (389 aa).

Positions 13 and 38 each coordinate substrate. Residues Y67, 101–102 (SK), Y126, N176, Y207, and 235–237 (SLS) each bind pyridoxal 5'-phosphate. Substrate is bound by residues K102, Y126, and N176. K238 carries the post-translational modification N6-(pyridoxal phosphate)lysine. R246 contacts pyridoxal 5'-phosphate. R364 is a binding site for substrate.

The protein belongs to the class-I pyridoxal-phosphate-dependent aminotransferase family. LL-diaminopimelate aminotransferase subfamily. In terms of assembly, homodimer. Pyridoxal 5'-phosphate is required as a cofactor.

It catalyses the reaction (2S,6S)-2,6-diaminopimelate + 2-oxoglutarate = (S)-2,3,4,5-tetrahydrodipicolinate + L-glutamate + H2O + H(+). It participates in amino-acid biosynthesis; L-lysine biosynthesis via DAP pathway; LL-2,6-diaminopimelate from (S)-tetrahydrodipicolinate (aminotransferase route): step 1/1. Functionally, involved in the synthesis of meso-diaminopimelate (m-DAP or DL-DAP), required for both lysine and peptidoglycan biosynthesis. Catalyzes the direct conversion of tetrahydrodipicolinate to LL-diaminopimelate. This Halothermothrix orenii (strain H 168 / OCM 544 / DSM 9562) protein is LL-diaminopimelate aminotransferase.